We begin with the raw amino-acid sequence, 421 residues long: Polymerase delta-interacting protein 3 (421 aa).

Residue Ala2 is modified to N-acetylalanine. Phosphoserine is present on Ser5. Residue Arg33 is modified to Omega-N-methylarginine. Phosphoserine occurs at positions 44 and 127. Position 140 is a phosphothreonine (Thr140). Lys200 is covalently cross-linked (Glycyl lysine isopeptide (Lys-Gly) (interchain with G-Cter in SUMO2)). A phosphoserine mark is found at Ser204, Ser215, and Ser217. Residue Lys223 forms a Glycyl lysine isopeptide (Lys-Gly) (interchain with G-Cter in SUMO2) linkage. Phosphoserine is present on Ser244. Lys248 participates in a covalent cross-link: Glycyl lysine isopeptide (Lys-Gly) (interchain with G-Cter in SUMO2). The residue at position 275 (Ser275) is a Phosphoserine. The region spanning 280 to 351 (TKMTVNNLHP…QPMKCNLHMN (72 aa)) is the RRM domain. Positions 370-379 (SMKKESELPR) are enriched in basic and acidic residues. A disordered region spans residues 370-393 (SMKKESELPRRVNSASSSNPPAEV). Residue Lys372 forms a Glycyl lysine isopeptide (Lys-Gly) (interchain with G-Cter in SUMO2) linkage. Phosphoserine; by RPS6KB1 is present on residues Ser383 and Ser385. Lys418 participates in a covalent cross-link: Glycyl lysine isopeptide (Lys-Gly) (interchain with G-Cter in SUMO2).

In terms of assembly, interacts with POLD2. Interacts with NCBP1 and EIF4A3. Associates with the multiprotein exon junction complex (EJC). Interacts with RPS6KB1 (activated). Interacts with ERH. Interacts with THOC2, DDX39B and ZC3H11A; the interactions are ATP-dependent and indicative for an association with the TREX complex. Post-translationally, phosphorylated at Ser-383 and Ser-385 by RPS6KB1.

It is found in the nucleus. The protein resides in the nucleus speckle. The protein localises to the cytoplasm. In terms of biological role, is involved in regulation of translation. Is preferentially associated with CBC-bound spliced mRNA-protein complexes during the pioneer round of mRNA translation. Contributes to enhanced translational efficiency of spliced over nonspliced mRNAs. Recruits activated ribosomal protein S6 kinase beta-1 I/RPS6KB1 to newly synthesized mRNA. Involved in nuclear mRNA export; probably mediated by association with the TREX complex. This is Polymerase delta-interacting protein 3 (POLDIP3) from Homo sapiens (Human).